The primary structure comprises 252 residues: Transmembrane ascorbate-dependent reductase CYB561 (252 aa).

Position 1 is an N-acetylmethionine (methionine 1). The Cytoplasmic segment spans residues methionine 1–tyrosine 17. A helical transmembrane segment spans residues valine 18–methionine 38. Residues phenylalanine 20–threonine 221 form the Cytochrome b561 domain. The Vesicular portion of the chain corresponds to tyrosine 39–asparagine 52. The helical transmembrane segment at valine 53–tyrosine 73 threads the bilayer. Residues histidine 54, arginine 74, and lysine 81 each coordinate heme b. The Cytoplasmic segment spans residues arginine 74–valine 86. L-ascorbate contacts are provided by lysine 81 and lysine 85. The helical transmembrane segment at leucine 87–phenylalanine 107 threads the bilayer. Heme b contacts are provided by residues histidine 88, aspartate 117 to serine 120, and histidine 122. Residues glutamate 108–cysteine 125 lie on the Vesicular side of the membrane. The chain crosses the membrane as a helical span at residues glycine 126 to phenylalanine 146. Residues proline 147–proline 159 are Cytoplasmic-facing. An L-ascorbate-binding site is contributed by arginine 154. The helical transmembrane segment at glutamine 160–leucine 180 threads the bilayer. The heme b site is built by histidine 161 and glutamate 182. The Vesicular portion of the chain corresponds to lysine 181 to glycine 199. The helical transmembrane segment at valine 200–leucine 220 threads the bilayer. The Cytoplasmic segment spans residues threonine 221 to glutamine 252. Lysine 226 contacts heme b. Phosphoserine is present on residues serine 248 and serine 250.

Heme b serves as cofactor. In terms of tissue distribution, expressed in the adrenal medulla and all brain regions, but not in visceral organs.

Its subcellular location is the cytoplasmic vesicle. It is found in the secretory vesicle. The protein resides in the chromaffin granule membrane. It catalyses the reaction monodehydro-L-ascorbate radical(out) + L-ascorbate(in) = monodehydro-L-ascorbate radical(in) + L-ascorbate(out). Its function is as follows. Transmembrane reductase that uses ascorbate as an electron donor in the cytoplasm and transfers electrons across membranes to reduce monodehydro-L-ascorbate radical in the lumen of secretory vesicles. It is therefore involved the regeneration and homeostasis within secretory vesicles of ascorbate which in turn provides reducing equivalents needed to support the activity of intravesicular enzymes. This chain is Transmembrane ascorbate-dependent reductase CYB561 (CYB561), found in Bos taurus (Bovine).